The chain runs to 257 residues: Triosephosphate isomerase (257 aa).

Substrate-binding residues include Asn11 and Lys13. The active-site Electrophile is His96. Glu170 acts as the Proton acceptor in catalysis.

This sequence belongs to the triosephosphate isomerase family. In terms of assembly, homodimer.

Its subcellular location is the cytoplasm. It carries out the reaction D-glyceraldehyde 3-phosphate = dihydroxyacetone phosphate. The catalysed reaction is dihydroxyacetone phosphate = methylglyoxal + phosphate. It functions in the pathway carbohydrate biosynthesis; gluconeogenesis. Its pathway is carbohydrate degradation; glycolysis; D-glyceraldehyde 3-phosphate from glycerone phosphate: step 1/1. Triosephosphate isomerase is an extremely efficient metabolic enzyme that catalyzes the interconversion between dihydroxyacetone phosphate (DHAP) and D-glyceraldehyde-3-phosphate (G3P) in glycolysis and gluconeogenesis. In terms of biological role, it is also responsible for the non-negligible production of methylglyoxal a reactive cytotoxic side-product that modifies and can alter proteins, DNA and lipids. In Giardia intestinalis (Giardia lamblia), this protein is Triosephosphate isomerase.